Consider the following 423-residue polypeptide: COP9 signalosome complex subunit 3 (423 aa).

An N-acetylalanine modification is found at Ala-2. Positions 197 to 365 constitute a PCI domain; sequence NFERALYFYE…GMVSFHDNPE (169 aa). The disordered stretch occupies residues 402 to 423; the sequence is QFVQKSMGSQEDDSGNKPSSYS. Phosphoserine is present on residues Ser-407, Ser-410, and Ser-423.

It belongs to the CSN3 family. As to quaternary structure, component of the CSN complex, composed of COPS1/GPS1, COPS2, COPS3, COPS4, COPS5, COPS6, COPS7 (COPS7A or COPS7B), COPS8 and COPS9. In the complex, it probably interacts directly with COPS1, COPS4, COPS8 and COPS9. Interacts with CK2 and PKD. Interacts with the translation initiation factor EIF3S6 and IKBKG. Interacts with ERCC6. As to expression, widely expressed.

The protein resides in the cytoplasm. It is found in the nucleus. Functionally, component of the COP9 signalosome complex (CSN), a complex involved in various cellular and developmental processes. The CSN complex is an essential regulator of the ubiquitin (Ubl) conjugation pathway by mediating the deneddylation of the cullin subunits of SCF-type E3 ligase complexes, leading to decrease the Ubl ligase activity of SCF-type complexes such as SCF, CSA or DDB2. The complex is also involved in phosphorylation of p53/TP53, c-jun/JUN, IkappaBalpha/NFKBIA, ITPK1 and IRF8/ICSBP, possibly via its association with CK2 and PKD kinases. CSN-dependent phosphorylation of TP53 and JUN promotes and protects degradation by the Ubl system, respectively. Essential to maintain the survival of epiblast cells and thus the development of the postimplantation embryo. This chain is COP9 signalosome complex subunit 3 (Cops3), found in Mus musculus (Mouse).